The sequence spans 298 residues: MDQKQIEEIVRSVMASMGQDVPQPVAPSTQEGAKPQCAAPTVTESCALDLGSAEAKAWIGVENPHRADVLTELRRSTAARVCTGRAGPRPRTQALLRFLADHSRSKDTVLKEVPEEWGKAQGLLEVRSEISDKNLYLTRPDMGRRLSPEAIDALKSQCVMNPDVQVVVSDGLSTDAITANYEEILPPLLAGLKQAGLNVGTPFFVRYGRVKIEDQIGEILGAKVVILLVGERPGLGQSESLSCYAVYSPRVATTVEADRTCISNIHQGGTPPVEAAAVIVDLAKRMLEQKASGINMTR.

Adenosylcob(III)alamin is bound by residues valine 210, glutamate 231, and cysteine 261.

The protein belongs to the EutC family. As to quaternary structure, the basic unit is a heterodimer which dimerizes to form tetramers. The heterotetramers trimerize; 6 large subunits form a core ring with 6 small subunits projecting outwards. Adenosylcob(III)alamin serves as cofactor.

Its subcellular location is the bacterial microcompartment. The enzyme catalyses ethanolamine = acetaldehyde + NH4(+). It functions in the pathway amine and polyamine degradation; ethanolamine degradation. In terms of biological role, catalyzes the deamination of various vicinal amino-alcohols to oxo compounds. Allows this organism to utilize ethanolamine as the sole source of nitrogen and carbon in the presence of external vitamin B12. This Salmonella typhi protein is Ethanolamine ammonia-lyase small subunit.